We begin with the raw amino-acid sequence, 356 residues long: DNA polymerase IV (356 aa).

Positions 1-188 (MDTSRKIIHI…IPVTKFYGVG (188 aa)) constitute a UmuC domain. Residues Asp11 and Asp106 each contribute to the Mg(2+) site. Residue Glu107 is part of the active site.

The protein belongs to the DNA polymerase type-Y family. In terms of assembly, monomer. Mg(2+) is required as a cofactor.

The protein resides in the cytoplasm. The enzyme catalyses DNA(n) + a 2'-deoxyribonucleoside 5'-triphosphate = DNA(n+1) + diphosphate. Its function is as follows. Poorly processive, error-prone DNA polymerase involved in untargeted mutagenesis. Copies undamaged DNA at stalled replication forks, which arise in vivo from mismatched or misaligned primer ends. These misaligned primers can be extended by PolIV. Exhibits no 3'-5' exonuclease (proofreading) activity. May be involved in translesional synthesis, in conjunction with the beta clamp from PolIII. In Listeria monocytogenes serotype 4b (strain F2365), this protein is DNA polymerase IV.